Consider the following 371-residue polypeptide: 4-hydroxybenzoate polyprenyltransferase, mitochondrial (371 aa).

Residues 1-45 constitute a mitochondrion transit peptide; it reads MLGSCGAGLVRGLRAETQAWLWGTRGRSLALVHAARGLHAANWQP. At 46–83 the chain is on the mitochondrial matrix side; it reads SPGQGPRGRPLSLSAAAVVNSAPRPLQPYLRLMRLDKP. A helical membrane pass occupies residues 84–104; it reads IGTWLLYLPCTWSIGLAADPG. The Mitochondrial intermembrane segment spans residues 105 to 108; that stretch reads CLPD. Residues 109–129 traverse the membrane as a helical segment; it reads WYMLSLFGTGAVLMRGAGCTI. The Mitochondrial matrix segment spans residues 130–171; that stretch reads NDMWDRDYDKKVTRTASRPIAAGDISTFRSFVFLGGQLTLAL. Residues 172-192 form a helical membrane-spanning segment; the sequence is GVLLCLNYYSIALGAASLLLV. The Mitochondrial intermembrane segment spans residues 193 to 200; it reads TTYPLMKR. A helical membrane pass occupies residues 201-221; the sequence is ITYWPQLALGLTFNWGALLGW. Topologically, residues 222-231 are mitochondrial matrix; it reads SAVKGSCDPS. Residues 232 to 252 traverse the membrane as a helical segment; sequence VCLPLYFSGIMWTLIYDTIYA. Residues 253 to 277 lie on the Mitochondrial intermembrane side of the membrane; the sequence is HQDKKDDALIGLKSTALLFREDTKK. Residues 278-298 traverse the membrane as a helical segment; it reads WLSGFSVAMLGALSLVGVNSG. At 299–300 the chain is on the mitochondrial matrix side; that stretch reads QT. The helical transmembrane segment at 301-321 threads the bilayer; the sequence is MPYYTALAAVGAHLAHQIYTL. At 322 to 332 the chain is on the mitochondrial intermembrane side; sequence DINRPEDCWEK. The helical transmembrane segment at 333–353 threads the bilayer; the sequence is FTSNRTIGLIIFLGIVLGNLC. The Mitochondrial matrix portion of the chain corresponds to 354-371; that stretch reads KAKETDKTRKNIENRMEN.

This sequence belongs to the UbiA prenyltransferase family. It depends on Mg(2+) as a cofactor.

It localises to the mitochondrion inner membrane. The catalysed reaction is an all-trans-polyprenyl diphosphate + 4-hydroxybenzoate = a 4-hydroxy-3-(all-trans-polyprenyl)benzoate + diphosphate. It catalyses the reaction all-trans-decaprenyl diphosphate + 4-hydroxybenzoate = 4-hydroxy-3-(all-trans-decaprenyl)benzoate + diphosphate. The enzyme catalyses all-trans-nonaprenyl diphosphate + 4-hydroxybenzoate = 4-hydroxy-3-(all-trans-nonaprenyl)benzoate + diphosphate. It functions in the pathway cofactor biosynthesis; ubiquinone biosynthesis. In terms of biological role, mediates the second step in the final reaction sequence of coenzyme Q (CoQ) biosynthesis. Catalyzes the prenylation of para-hydroxybenzoate (PHB) with an all-trans polyprenyl donor (such as all-trans-decaprenyl diphosphate). The length of the polyprenyl side chain varies depending on the species, in humans, the side chain is comprised of 10 isoprenyls (decaprenyl) producing CoQ10 (also known as ubiquinone), whereas rodents predominantly generate CoQ9. However, this specificity is not complete, human tissues have low amounts of CoQ9 and rodent organs contain some CoQ10. Plays a central role in the biosynthesis of CoQ10. CoQ10 is a vital molecule that transports electrons from mitochondrial respiratory chain complexes. CoQs also function as cofactors for uncoupling protein and play a role as regulators of the extracellularly-induced ceramide-dependent apoptotic pathway. Regulates mitochondrial permeability transition pore (mPTP) opening and ROS production (pivotal events in cell death) in a tissue specific manner. The sequence is that of 4-hydroxybenzoate polyprenyltransferase, mitochondrial from Bos taurus (Bovine).